The chain runs to 36 residues: uncharacterized protein (36 aa).

A compositionally biased stretch (polar residues) spans 1–14; that stretch reads MNQLGSGPTKQGVA. The tract at residues 1 to 36 is disordered; that stretch reads MNQLGSGPTKQGVATNTGSTGTTKNNSNLSGKGWVL. Over residues 15–36 the composition is skewed to low complexity; it reads TNTGSTGTTKNNSNLSGKGWVL.

This is an uncharacterized protein from Dictyostelium discoideum (Social amoeba).